We begin with the raw amino-acid sequence, 336 residues long: Mitochondrial fission regulator 2 (336 aa).

A coiled-coil region spans residues 139 to 166 (QPDALLKISALEEELQRLRAQIATIITA). The disordered stretch occupies residues 296-336 (HRQRDDSFGKENHSAEPSPFSSPDTPRIFQHTRRSQGRIHL). Positions 297–309 (RQRDDSFGKENHS) are enriched in basic and acidic residues. Residues 325-336 (QHTRRSQGRIHL) show a composition bias toward basic residues.

It belongs to the MTFR1 family.

It is found in the mitochondrion. In terms of biological role, may play a role in mitochondrial aerobic respiration. Can also promote mitochondrial fission. The chain is Mitochondrial fission regulator 2 (mtfr2) from Danio rerio (Zebrafish).